Here is a 250-residue protein sequence, read N- to C-terminus: Putative ABC transporter ATP-binding protein YjkB (250 aa).

The ABC transporter domain maps to 13-245; that stretch reads ISFRSVRKSY…PQHEAAKEFL (233 aa). ATP is bound at residue 49-56; it reads GPSGSGKS.

It belongs to the ABC transporter superfamily.

This is Putative ABC transporter ATP-binding protein YjkB (yjkB) from Bacillus subtilis (strain 168).